Reading from the N-terminus, the 180-residue chain is Beta-lactoglobulin-1/B (180 aa).

A signal peptide spans 1–18 (MKCLLLALGLALACGVQA). 3 disulfide bridges follow: C84-C178, C124-C137, and C124-C139.

The protein belongs to the calycin superfamily. Lipocalin family. As to quaternary structure, under physiological conditions beta-lactoglobulin exists as an equilibrium mixture of monomeric and dimeric forms. Alternate disulfide bonds occur in equal amounts.

The protein resides in the secreted. Functionally, lactoglobulin is the primary component of whey, it binds retinol and is probably involved in the transport of that molecule. The chain is Beta-lactoglobulin-1/B from Ovis aries (Sheep).